We begin with the raw amino-acid sequence, 88 residues long: Large ribosomal subunit protein bL27 (88 aa).

The protein belongs to the bacterial ribosomal protein bL27 family.

This is Large ribosomal subunit protein bL27 from Acidobacterium capsulatum (strain ATCC 51196 / DSM 11244 / BCRC 80197 / JCM 7670 / NBRC 15755 / NCIMB 13165 / 161).